A 422-amino-acid chain; its full sequence is MTAEKITQGTEGLNVPNEPIIPFIIGDGIGPDIWKAASRVIDAAVEKAYNGEKRIEWKEVLAGQKAFDTTGEWLPQETLDTIKEYLIAVKGPLTTPIGGGIRSLNVALRQELDLFTCLRPVRWFKGVPSPVKRPQDVDMVIFRENTEDIYAGIEFKEGTTEVKKVIDFLQNEMGATNIRFPETSGIGIKPVSKEGTERLVRAAIQYAIDNNRKSVTLVHKGNIMKFTEGSFKQWGYDLALSEFGDQVFTWQQYDEIVEKEGRDAANAAQEKAEKEGKIIIKDSIADIFLQQILTRPAEHDVVATMNLNGDYISDALAAQVGGIGIAPGANINYETGHAIFEATHGTAPKYAGLNKVNPSSVILSSVLMLEHLGWQEAADKITDSIEDTIASKVVTYDFARLMDGAEEVSTSAFADELIKNLK.

T94 is an NADP(+) binding site. D-threo-isocitrate-binding residues include S103, N105, R109, R119, and R143. D310 is a binding site for Mg(2+). Residues 344–350 (HGTAPKY), N357, Y396, and R400 each bind NADP(+).

It belongs to the isocitrate and isopropylmalate dehydrogenases family. In terms of assembly, homodimer. Mg(2+) is required as a cofactor. The cofactor is Mn(2+).

The enzyme catalyses D-threo-isocitrate + NADP(+) = 2-oxoglutarate + CO2 + NADPH. Its function is as follows. Catalyzes the oxidative decarboxylation of isocitrate to 2-oxoglutarate and carbon dioxide with the concomitant reduction of NADP(+). In Staphylococcus aureus (strain MSSA476), this protein is Isocitrate dehydrogenase [NADP] (icd).